We begin with the raw amino-acid sequence, 250 residues long: uncharacterized protein (250 aa).

Residues 207–226 (LNDRDAINKSEEARKAREEV) are compositionally biased toward basic and acidic residues. The disordered stretch occupies residues 207–250 (LNDRDAINKSEEARKAREEVFIPSEPSKPSIASKRSSASKSTKS). Residues 233–250 (SKPSIASKRSSASKSTKS) show a composition bias toward low complexity.

Its subcellular location is the plastid. It is found in the chloroplast. This is an uncharacterized protein from Chlorella vulgaris (Green alga).